A 249-amino-acid polypeptide reads, in one-letter code: Uridylate kinase (249 aa).

22–25 (KISG) serves as a coordination point for ATP. The involved in allosteric activation by GTP stretch occupies residues 30-35 (GTQGFG). UMP is bound at residue Gly-64. ATP is bound by residues Gly-65 and Arg-69. UMP contacts are provided by residues Asp-84 and 145–152 (TGNPYFTT). Asn-173, Tyr-179, and Asp-182 together coordinate ATP.

This sequence belongs to the UMP kinase family. In terms of assembly, homohexamer.

It is found in the cytoplasm. The catalysed reaction is UMP + ATP = UDP + ADP. It functions in the pathway pyrimidine metabolism; CTP biosynthesis via de novo pathway; UDP from UMP (UMPK route): step 1/1. Its activity is regulated as follows. Allosterically activated by GTP. Inhibited by UTP. Functionally, catalyzes the reversible phosphorylation of UMP to UDP. The polypeptide is Uridylate kinase (Ruegeria sp. (strain TM1040) (Silicibacter sp.)).